The sequence spans 335 residues: Deoxyhypusine hydroxylase (335 aa).

5 HEAT-like PBS-type repeats span residues 71 to 97 (LKHELAYCLGQTRNPESVPYLQEVVKD), 104 to 130 (CRHEAAEALGALGYEDSLEILKVLRDN), 200 to 233 (QRYRAMFALRDLASPPDLPTATHAVEALAKGLKD), 238 to 264 (FRHEIAFVFGQLSHPASIPSLTEALSD), and 271 to 298 (VRHEAAEALGSLGDCEGVEDTLKKFLND). Fe cation is bound by residues histidine 73, glutamate 74, histidine 106, and glutamate 107. Histidine 240, glutamate 241, histidine 273, and glutamate 274 together coordinate Fe cation.

The protein belongs to the deoxyhypusine hydroxylase family. Requires Fe(2+) as cofactor.

The protein localises to the cytoplasm. It localises to the nucleus. The enzyme catalyses [eIF5A protein]-deoxyhypusine + AH2 + O2 = [eIF5A protein]-hypusine + A + H2O. It participates in protein modification; eIF5A hypusination. Catalyzes the hydroxylation of the N(6)-(4-aminobutyl)-L-lysine intermediate to form hypusine, an essential post-translational modification only found in mature eIF-5A factor. The chain is Deoxyhypusine hydroxylase (lia1) from Aspergillus clavatus (strain ATCC 1007 / CBS 513.65 / DSM 816 / NCTC 3887 / NRRL 1 / QM 1276 / 107).